The following is a 506-amino-acid chain: Glutamate--tRNA ligase (506 aa).

The short motif at 12–22 is the 'HIGH' region element; it reads PSPTGDPHVGT. The 'KMSKS' region signature appears at 253-257; that stretch reads KLSKR. Position 256 (Lys256) interacts with ATP.

This sequence belongs to the class-I aminoacyl-tRNA synthetase family. Glutamate--tRNA ligase type 1 subfamily. As to quaternary structure, monomer.

It localises to the cytoplasm. The catalysed reaction is tRNA(Glu) + L-glutamate + ATP = L-glutamyl-tRNA(Glu) + AMP + diphosphate. Its function is as follows. Catalyzes the attachment of glutamate to tRNA(Glu) in a two-step reaction: glutamate is first activated by ATP to form Glu-AMP and then transferred to the acceptor end of tRNA(Glu). The chain is Glutamate--tRNA ligase from Chlamydia muridarum (strain MoPn / Nigg).